The primary structure comprises 129 residues: ATP synthase epsilon chain (129 aa).

Belongs to the ATPase epsilon chain family. F-type ATPases have 2 components, CF(1) - the catalytic core - and CF(0) - the membrane proton channel. CF(1) has five subunits: alpha(3), beta(3), gamma(1), delta(1), epsilon(1). CF(0) has three main subunits: a, b and c.

The protein localises to the cell inner membrane. Functionally, produces ATP from ADP in the presence of a proton gradient across the membrane. This Campylobacter jejuni subsp. jejuni serotype O:2 (strain ATCC 700819 / NCTC 11168) protein is ATP synthase epsilon chain.